Consider the following 171-residue polypeptide: Inosine/xanthosine triphosphatase (171 aa).

8–13 (TTNPAK) is a substrate binding site. Residues Glu-38 and Gln-68 each coordinate Mg(2+).

This sequence belongs to the YjjX NTPase family. In terms of assembly, homodimer. Mg(2+) is required as a cofactor. Mn(2+) serves as cofactor.

The enzyme catalyses XTP + H2O = XDP + phosphate + H(+). It carries out the reaction ITP + H2O = IDP + phosphate + H(+). Its function is as follows. Phosphatase that hydrolyzes non-canonical purine nucleotides such as XTP and ITP to their respective diphosphate derivatives. Probably excludes non-canonical purines from DNA/RNA precursor pool, thus preventing their incorporation into DNA/RNA and avoiding chromosomal lesions. The polypeptide is Inosine/xanthosine triphosphatase (Citrobacter koseri (strain ATCC BAA-895 / CDC 4225-83 / SGSC4696)).